The sequence spans 605 residues: Elongation factor 4 (605 aa).

The 183-residue stretch at 11-193 folds into the tr-type G domain; the sequence is KNIRNFSIIA…TLVDVIPAPT (183 aa). Residues 23–28 and 140–143 each bind GTP; these read DHGKST and NKID.

This sequence belongs to the TRAFAC class translation factor GTPase superfamily. Classic translation factor GTPase family. LepA subfamily.

Its subcellular location is the cell inner membrane. The catalysed reaction is GTP + H2O = GDP + phosphate + H(+). Required for accurate and efficient protein synthesis under certain stress conditions. May act as a fidelity factor of the translation reaction, by catalyzing a one-codon backward translocation of tRNAs on improperly translocated ribosomes. Back-translocation proceeds from a post-translocation (POST) complex to a pre-translocation (PRE) complex, thus giving elongation factor G a second chance to translocate the tRNAs correctly. Binds to ribosomes in a GTP-dependent manner. This is Elongation factor 4 from Acinetobacter baumannii (strain SDF).